Reading from the N-terminus, the 216-residue chain is Large ribosomal subunit protein uL3 (216 aa).

Positions 133 to 145 are enriched in polar residues; that stretch reads GRATHGNSRSHNV. Positions 133-153 are disordered; sequence GRATHGNSRSHNVPGSIGMAQ. Position 153 is an N5-methylglutamine (glutamine 153).

The protein belongs to the universal ribosomal protein uL3 family. In terms of assembly, part of the 50S ribosomal subunit. Forms a cluster with proteins L14 and L19. In terms of processing, methylated by PrmB.

Functionally, one of the primary rRNA binding proteins, it binds directly near the 3'-end of the 23S rRNA, where it nucleates assembly of the 50S subunit. This chain is Large ribosomal subunit protein uL3, found in Burkholderia cenocepacia (strain ATCC BAA-245 / DSM 16553 / LMG 16656 / NCTC 13227 / J2315 / CF5610) (Burkholderia cepacia (strain J2315)).